Consider the following 663-residue polypeptide: Transmembrane 9 superfamily member 2 (663 aa).

The N-terminal stretch at M1–P28 is a signal peptide. Residues G29–Q300 lie on the Lumenal side of the membrane. The helical transmembrane segment at W301–I321 threads the bilayer. The Cytoplasmic segment spans residues M322–Q374. The chain crosses the membrane as a helical span at residues I375–N395. Residues R396–A398 are Lumenal-facing. A helical transmembrane segment spans residues L399 to A419. Topologically, residues R420–T437 are cytoplasmic. A helical transmembrane segment spans residues S438–G458. At E459–P466 the chain is on the lumenal side. The helical transmembrane segment at F467 to I487 threads the bilayer. At G488–P522 the chain is on the cytoplasmic side. The helical transmembrane segment at G523–L543 threads the bilayer. Residues N544–M554 lie on the Lumenal side of the membrane. A helical membrane pass occupies residues F555–L575. At L576–R591 the chain is on the cytoplasmic side. The chain crosses the membrane as a helical span at residues S592–F612. The Lumenal segment spans residues S613 to M631. Residues I632–F652 traverse the membrane as a helical segment. The Cytoplasmic segment spans residues V653–D663.

Belongs to the nonaspanin (TM9SF) (TC 9.A.2) family.

It is found in the endosome membrane. The protein resides in the golgi outpost. It localises to the cytoplasm. Its subcellular location is the cytoskeleton. The protein localises to the microtubule organizing center. In the intracellular compartments, may function as a channel or small molecule transporter. The polypeptide is Transmembrane 9 superfamily member 2 (TM9SF2) (Pongo abelii (Sumatran orangutan)).